Consider the following 314-residue polypeptide: ATP synthase gamma chain (314 aa).

It belongs to the ATPase gamma chain family. In terms of assembly, F-type ATPases have 2 components, CF(1) - the catalytic core - and CF(0) - the membrane proton channel. CF(1) has five subunits: alpha(3), beta(3), gamma(1), delta(1), epsilon(1). CF(0) has three main subunits: a, b and c.

The protein localises to the cellular thylakoid membrane. Produces ATP from ADP in the presence of a proton gradient across the membrane. The gamma chain is believed to be important in regulating ATPase activity and the flow of protons through the CF(0) complex. This is ATP synthase gamma chain from Crocosphaera subtropica (strain ATCC 51142 / BH68) (Cyanothece sp. (strain ATCC 51142)).